Here is a 328-residue protein sequence, read N- to C-terminus: Radiation response metalloprotease IrrE (328 aa).

The segment at 1-31 (MPSANVSPPCPSGVRGGGMGPKAKAEASKPH) is disordered. Position 118 (H118) interacts with Zn(2+). Residue E119 is part of the active site. Zn(2+)-binding residues include H122 and E149. Disordered regions lie at residues 217 to 238 (PREQ…LTVR) and 309 to 328 (RLGR…DAAQ).

Functionally, plays a central regulatory role in DNA repair and protection pathways in response to radiation stress. Acts as a site-specific metalloprotease that cleaves and inactivates the repressor protein DdrO, resulting in induced expression of genes required for DNA repair and cell survival after exposure to radiation. Regulates the expression of dozens of proteins from different pathways, including the important DNA repair proteins RecA and PprA. Binds to the promoters of recA and pprA. This is Radiation response metalloprotease IrrE from Deinococcus radiodurans (strain ATCC 13939 / DSM 20539 / JCM 16871 / CCUG 27074 / LMG 4051 / NBRC 15346 / NCIMB 9279 / VKM B-1422 / R1).